Reading from the N-terminus, the 911-residue chain is Zinc finger protein 721 (911 aa).

The C2H2-type 1; degenerate zinc-finger motif lies at 69-91 (FQCNARVKVFSKFANSNKDKTRH). The segment at 97-119 (FKCNECGKSFQKFSDLTQHKGIH) adopts a C2H2-type 2 zinc-finger fold. The C2H2-type 3; degenerate zinc finger occupies 125 to 147 (YTCEERGKDFGWYTDLNQHKKIH). The C2H2-type 4 zinc finger occupies 153–175 (YKCEECGKAFNRSTNLTAHKRIH). Residues 181–203 (YTGEDRDRAFGWSTNLNEYKKIH) form a C2H2-type 5; degenerate zinc finger. 7 consecutive C2H2-type zinc fingers follow at residues 209-231 (YKCK…EKIH), 237-259 (YKCK…KRIH), 265-287 (FKCL…RRIH), 293-315 (YTCE…RRIH), 321-343 (YTCG…RRIH), 349-371 (YKCE…KKIH), and 377-399 (YKCE…KRIH). The C2H2-type 13; degenerate zinc-finger motif lies at 405–427 (YTCEDRGRAFGLSTNLNEYKKIH). 6 consecutive C2H2-type zinc fingers follow at residues 433–455 (YKCK…EKIH), 461–483 (YKCK…KRIH), 489–511 (FECL…RRIH), 517–539 (YTCE…RRIH), 545–567 (YTCE…RRIH), and 573–595 (YKCE…KKIH). Residue Lys-478 forms a Glycyl lysine isopeptide (Lys-Gly) (interchain with G-Cter in SUMO2) linkage. The segment at 601 to 623 (YKCEECGKDFVWYTDLNQQKKIY) adopts a C2H2-type 20; degenerate zinc-finger fold. Residues 629–651 (YKCEECGKAFAPSTDLNQHTKIL) form a C2H2-type 21; degenerate zinc finger. Lys-649 is covalently cross-linked (Glycyl lysine isopeptide (Lys-Gly) (interchain with G-Cter in SUMO2)). 2 consecutive C2H2-type zinc fingers follow at residues 657–679 (YKCE…KKIH) and 685–707 (YKCE…RRVH). Residues 713-735 (YKCEDRGRSFGWSTNLNEYKKIH) form a C2H2-type 24; degenerate zinc finger. C2H2-type zinc fingers lie at residues 741–763 (YKCK…EKIH), 769–791 (YKCK…KRIH), 797–819 (FKCL…RRIH), 825–847 (YTCE…RRIH), 853–875 (YTCG…KKIH), and 881–903 (YTCG…KKIH). A Glycyl lysine isopeptide (Lys-Gly) (interchain with G-Cter in SUMO2) cross-link involves residue Lys-786.

This sequence belongs to the krueppel C2H2-type zinc-finger protein family.

It is found in the nucleus. Its function is as follows. May be involved in transcriptional regulation. The sequence is that of Zinc finger protein 721 (ZNF721) from Homo sapiens (Human).